The primary structure comprises 51 residues: Insulin (51 aa).

3 cysteine pairs are disulfide-bonded: C8–C37, C20–C50, and C36–C41.

The protein belongs to the insulin family. Heterodimer of a B chain and an A chain linked by two disulfide bonds.

It is found in the secreted. Its function is as follows. Insulin decreases blood glucose concentration. It increases cell permeability to monosaccharides, amino acids and fatty acids. It accelerates glycolysis, the pentose phosphate cycle, and glycogen synthesis in liver. The chain is Insulin (ins) from Gadus morhua subsp. callarias (Baltic cod).